A 433-amino-acid chain; its full sequence is Serendipity locus protein delta (433 aa).

The region spanning 1–90 is the ZAD domain; it reads MDTCFFCGAV…TQKRLTTQLK (90 aa). Positions 4, 7, 61, and 64 each coordinate Zn(2+). Residues 141-162 form a disordered region; that stretch reads DTEIKREFVDEEEEEDDDDDDE. The span at 149–162 shows a compositional bias: acidic residues; sequence VDEEEEEDDDDDDE. Residues 187–193 carry the Nuclear localization signal motif; sequence PTKKRVK. C2H2-type zinc fingers lie at residues 194–217, 223–245, 251–273, 279–301, 308–330, 337–359, and 405–428; these read QECTTCGKVYNSWYQLQKHISEEH, HICPICGVIRRDEEYLELHMNLH, KQCRYCPKSFSRPVNTLRHMRMH, YQCEKCGLRFSQDNLLYNHRLRH, IICSICNVSFKSRKTFNHHTLIH, HYCSVCPKSFTERYTLKMHMKTH, and GFCLICNTNFENKKELEHHLQFDH.

Homodimer (via ZAD domain) in solution. Binds DNA as a homodimer. N-terminal regions of the protein are required, in addition to the zinc fingers, for the specificity of chromatin-binding. Predominantly localized to the sub- and supraesophagal ganglia and the ventral nerve cord in the embryo, after dorsal closure.

The protein localises to the nucleus. Its function is as follows. Transcriptional activator that controls bicoid gene expression during oogenesis. Found in transcriptionally active cells. Binds to specific sites on polytene chromosomes of third instar larvae. Binds to the consensus DNA sequence 5'-YTAGAGATGGRAA-3'. The sequence is that of Serendipity locus protein delta (Sry-delta) from Drosophila melanogaster (Fruit fly).